We begin with the raw amino-acid sequence, 965 residues long: Serine/threonine-protein kinase tousled-like 1 (965 aa).

Disordered stretches follow at residues 1-22 (MSML…GGER), 35-72 (PQNK…ATGD), 95-120 (QNSS…TRSS), 172-292 (NHQQ…KQER), 320-402 (QNQG…QSGR), and 538-576 (RKPL…DDAI). The span at 10–21 (VAGGGSSSGGGE) shows a compositional bias: gly residues. Residues 42–52 (TVQSSGSSSNH) are compositionally biased toward polar residues. Residues 172-231 (NHQQQMQQMHYHQQQQQYQQQQAQHHQMYAPQIQQQQQQPQQQSQQQSAQQPQQSSAALQ) show a composition bias toward low complexity. Composition is skewed to polar residues over residues 233–244 (VNESSNLSSAGS) and 320–341 (QNQG…SYDS). Residues 342-355 (QQQQPQMNQHEMQN) show a composition bias toward low complexity. Over residues 365 to 381 (LGVNNRGTPTPTQQQHY) the composition is skewed to polar residues. Residues 382–401 (SSDSNSNSNQSPPGQGNQSG) are compositionally biased toward low complexity. The span at 552 to 572 (AVNSQNDSNGMQPSTSSNTNG) shows a compositional bias: polar residues. Ser634 carries the phosphoserine modification. The Protein kinase domain occupies 651–928 (YLMLNLLGKG…VFELAKHELF (278 aa)). ATP is bound by residues 657 to 665 (LGKGGFSEV) and Lys680. Asp781 acts as the Proton acceptor in catalysis.

This sequence belongs to the protein kinase superfamily. Ser/Thr protein kinase family. Interacts with air-2. Autophosphorylates in vitro. Phosphorylation on Ser-634 by air-2 enhances catalytic activity.

The protein resides in the nucleus. It catalyses the reaction L-seryl-[protein] + ATP = O-phospho-L-seryl-[protein] + ADP + H(+). The catalysed reaction is L-threonyl-[protein] + ATP = O-phospho-L-threonyl-[protein] + ADP + H(+). Essential for appropriate transcription during embryonic development. May act during transcription elongation to activate the RNA polymerase II large subunit (ama-1) by phosphorylating the Ser-2 residues of the C-terminal domain 7-residue repeats. Does not phosphorylate histone H3. This chain is Serine/threonine-protein kinase tousled-like 1 (tlk-1), found in Caenorhabditis elegans.